The sequence spans 337 residues: RNA 3'-terminal phosphate cyclase (337 aa).

ATP contacts are provided by residues Gln101 and 282 to 285 (HMSD). The Tele-AMP-histidine intermediate role is filled by His306.

It belongs to the RNA 3'-terminal cyclase family. Type 1 subfamily.

Its subcellular location is the cytoplasm. The enzyme catalyses a 3'-end 3'-phospho-ribonucleotide-RNA + ATP = a 3'-end 2',3'-cyclophospho-ribonucleotide-RNA + AMP + diphosphate. Catalyzes the conversion of 3'-phosphate to a 2',3'-cyclic phosphodiester at the end of RNA. The mechanism of action of the enzyme occurs in 3 steps: (A) adenylation of the enzyme by ATP; (B) transfer of adenylate to an RNA-N3'P to produce RNA-N3'PP5'A; (C) and attack of the adjacent 2'-hydroxyl on the 3'-phosphorus in the diester linkage to produce the cyclic end product. The biological role of this enzyme is unknown but it is likely to function in some aspects of cellular RNA processing. The polypeptide is RNA 3'-terminal phosphate cyclase (Saccharolobus islandicus (strain M.16.27) (Sulfolobus islandicus)).